We begin with the raw amino-acid sequence, 935 residues long: Isoleucine--tRNA ligase (935 aa).

A 'HIGH' region motif is present at residues 58-68; that stretch reads PYANGSIHVGH. Glu558 serves as a coordination point for L-isoleucyl-5'-AMP. The short motif at 599–603 is the 'KMSKS' region element; it reads KMSKS. ATP is bound at residue Lys602. Cys897, Cys900, Cys917, and Cys920 together coordinate Zn(2+).

This sequence belongs to the class-I aminoacyl-tRNA synthetase family. IleS type 1 subfamily. Monomer. Zn(2+) is required as a cofactor.

Its subcellular location is the cytoplasm. The enzyme catalyses tRNA(Ile) + L-isoleucine + ATP = L-isoleucyl-tRNA(Ile) + AMP + diphosphate. Functionally, catalyzes the attachment of isoleucine to tRNA(Ile). As IleRS can inadvertently accommodate and process structurally similar amino acids such as valine, to avoid such errors it has two additional distinct tRNA(Ile)-dependent editing activities. One activity is designated as 'pretransfer' editing and involves the hydrolysis of activated Val-AMP. The other activity is designated 'posttransfer' editing and involves deacylation of mischarged Val-tRNA(Ile). This Francisella tularensis subsp. tularensis (strain SCHU S4 / Schu 4) protein is Isoleucine--tRNA ligase.